The following is a 260-amino-acid chain: Thrombin-like enzyme flavoxobin (260 aa).

Positions 1 to 18 are cleaved as a signal peptide; the sequence is MVLIRVLANLLILQLSYA. Positions 19–24 are excised as a propeptide; it reads QKSSEL. One can recognise a Peptidase S1 domain in the interval 25–251; it reads VIGGDECNIN…YNAWIQSIIA (227 aa). 6 disulfide bridges follow: C31-C165, C52-C68, C100-C258, C144-C212, C176-C191, and C202-C227. Residues H67 and D112 each act as charge relay system in the active site. The Charge relay system role is filled by S206.

The protein belongs to the peptidase S1 family. Snake venom subfamily. As to quaternary structure, monomer. Expressed by the venom gland.

The protein resides in the secreted. It carries out the reaction Selective cleavage of Arg-|-Xaa bond in fibrinogen, to form fibrin, and release fibrinopeptide A. The specificity of further degradation of fibrinogen varies with species origin of the enzyme.. Inhibited by alpha(2)-macroglobulin, diisopropylfluorophosphate (DFP) and PMSF. Low inhibition by tosyl-L-lysine chloromethyl ketone. In terms of biological role, thrombin-like snake venom serine protease that clots fibrinogen (FGA) by releasing fibrinopeptide A. According to PubMed:8585090, only cleaves rabbit fibrinogen, whereas no specificity is described in PubMed:3910643 (tests done on bovine fibrinogen). Also acts as a C3 convertase that independently cleaves human C3 and kick-starts the complement cascade. Also increases urokinase-type plasminogen activator (PLAU) and plasminogen activator inhibitor (SERPINE1) in cultured bovine pulmonary artery endothelial cells. Dose-dependently inhibits collagen-induced platelet aggregation. In Protobothrops flavoviridis (Habu), this protein is Thrombin-like enzyme flavoxobin (TLF1).